Reading from the N-terminus, the 368-residue chain is Glutaminyl-peptide cyclotransferase (368 aa).

Positions 1–33 are cleaved as a signal peptide; the sequence is MARERRDSKAATFFCLAWALCLALPGFPQHVSG. The N-linked (GlcNAc...) asparagine glycan is linked to Asn53. A disulfide bridge connects residues Cys143 and Cys169. Asp164 lines the Zn(2+) pocket. The active-site Proton acceptor is Glu207. Residue Glu208 participates in Zn(2+) binding. Asp254 functions as the Proton acceptor in the catalytic mechanism. A glycan (N-linked (GlcNAc...) asparagine) is linked at Asn292. His336 is a binding site for Zn(2+). The N-linked (GlcNAc...) asparagine glycan is linked to Asn352.

Belongs to the glutaminyl-peptide cyclotransferase family. As to expression, expressed by the venom gland.

It localises to the secreted. The catalysed reaction is N-terminal L-glutaminyl-[peptide] = N-terminal 5-oxo-L-prolyl-[peptide] + NH4(+). Responsible for the biosynthesis of pyroglutamyl peptides. Has a bias against acidic and tryptophan residues adjacent to the N-terminal glutaminyl residue and a lack of importance of chain length after the second residue. Also catalyzes N-terminal pyroglutamate formation. The chain is Glutaminyl-peptide cyclotransferase (QPCT) from Gloydius blomhoffii (Mamushi).